The chain runs to 61 residues: Large ribosomal subunit protein bL32 (61 aa).

Residues 1 to 16 show a composition bias toward basic residues; sequence MAVPKRKTSPSKRGMR. Positions 1 to 61 are disordered; that stretch reads MAVPKRKTSP…RQVLTPKESA (61 aa). The segment covering 28–44 has biased composition (basic and acidic residues); the sequence is VEDKNSGELRRPHHIDL.

The protein belongs to the bacterial ribosomal protein bL32 family.

In Rhizobium etli (strain CIAT 652), this protein is Large ribosomal subunit protein bL32.